A 261-amino-acid chain; its full sequence is Carnitinyl-CoA dehydratase (261 aa).

The active-site Nucleophile is glutamate 111. Glutamate 131 functions as the Proton acceptor in the catalytic mechanism.

It belongs to the enoyl-CoA hydratase/isomerase family.

It catalyses the reaction (R)-carnitinyl-CoA = crotonobetainyl-CoA + H2O. The protein operates within amine and polyamine metabolism; carnitine metabolism. Its function is as follows. Catalyzes the reversible dehydration of L-carnitinyl-CoA to crotonobetainyl-CoA. The protein is Carnitinyl-CoA dehydratase of Shigella flexneri.